Here is a 312-residue protein sequence, read N- to C-terminus: Olfactory receptor 2L8 (312 aa).

Residues 1-24 lie on the Extracellular side of the membrane; that stretch reads MENYNQTSTDFILLGLFPPSRIDL. Asparagine 5 carries an N-linked (GlcNAc...) asparagine glycan. Residues 25–48 form a helical membrane-spanning segment; that stretch reads FFFILIVFIFLMALIGNLSMILLI. The Cytoplasmic portion of the chain corresponds to 49–56; sequence FLDTHLHT. A helical transmembrane segment spans residues 57–78; it reads PMYFLLSQLSLIDLNYISTIVP. The Extracellular segment spans residues 79 to 99; that stretch reads KMASDFLHGNKSISFTGCGIQ. The N-linked (GlcNAc...) asparagine glycan is linked to asparagine 88. A disulfide bridge links cysteine 96 with cysteine 188. A helical transmembrane segment spans residues 100–119; it reads SFFFLALGGAEALLLASMAY. The Cytoplasmic segment spans residues 120 to 138; it reads DRYIAICFPLHYLIRMSKR. Residues 139–157 form a helical membrane-spanning segment; it reads VCVLMITGSWIIGSINACA. The Extracellular portion of the chain corresponds to 158–194; the sequence is HTVYVLHIPYCRSRAINHFFCDVPAMVTLACMDTWVY. The helical transmembrane segment at 195 to 218 threads the bilayer; the sequence is EGTVFLSATIFLVFPFIGISCSYG. The Cytoplasmic portion of the chain corresponds to 219–235; it reads QVLFAVYHMKSAEGRKK. The chain crosses the membrane as a helical span at residues 236 to 258; the sequence is AYLTCSTHLTVVTFYYAPFVYTY. The Extracellular segment spans residues 259-271; it reads LRPRSLRSPTEDK. Residues 272 to 291 traverse the membrane as a helical segment; it reads VLAVFYTILTPMLNPIIYSL. Topologically, residues 292–312 are cytoplasmic; the sequence is RNKEVMGALTRVSQRICSVKM.

The protein belongs to the G-protein coupled receptor 1 family.

The protein localises to the cell membrane. In terms of biological role, odorant receptor. This chain is Olfactory receptor 2L8 (OR2L8), found in Homo sapiens (Human).